We begin with the raw amino-acid sequence, 343 residues long: S-adenosylmethionine:tRNA ribosyltransferase-isomerase (343 aa).

This sequence belongs to the QueA family. In terms of assembly, monomer.

It is found in the cytoplasm. The enzyme catalyses 7-aminomethyl-7-carbaguanosine(34) in tRNA + S-adenosyl-L-methionine = epoxyqueuosine(34) in tRNA + adenine + L-methionine + 2 H(+). It functions in the pathway tRNA modification; tRNA-queuosine biosynthesis. Its function is as follows. Transfers and isomerizes the ribose moiety from AdoMet to the 7-aminomethyl group of 7-deazaguanine (preQ1-tRNA) to give epoxyqueuosine (oQ-tRNA). This Pelobacter propionicus (strain DSM 2379 / NBRC 103807 / OttBd1) protein is S-adenosylmethionine:tRNA ribosyltransferase-isomerase.